We begin with the raw amino-acid sequence, 396 residues long: Stearoyl-[acyl-carrier-protein] 9-desaturase, chloroplastic (396 aa).

The N-terminal 33 residues, 1–33 (MALRITPVTLQSERYRSFSFPKKANLRSPKFAM), are a transit peptide targeting the chloroplast. Position 34 is a blocked amino end (Ala); partial (A34). E138, E176, H179, E229, E262, and H265 together coordinate Fe cation.

The protein belongs to the fatty acid desaturase type 2 family. In terms of assembly, homodimer. Requires Fe(2+) as cofactor. In terms of processing, most of the N-terminus is blocked.

The protein resides in the plastid. It is found in the chloroplast. The enzyme catalyses octadecanoyl-[ACP] + 2 reduced [2Fe-2S]-[ferredoxin] + O2 + 2 H(+) = (9Z)-octadecenoyl-[ACP] + 2 oxidized [2Fe-2S]-[ferredoxin] + 2 H2O. It participates in lipid metabolism; fatty acid metabolism. In terms of biological role, converts stearoyl-ACP to oleoyl-ACP by introduction of a cis double bond between carbons 9 and 10 of the acyl chain. This Carthamus tinctorius (Safflower) protein is Stearoyl-[acyl-carrier-protein] 9-desaturase, chloroplastic.